Consider the following 133-residue polypeptide: Large-conductance mechanosensitive channel (133 aa).

The next 2 membrane-spanning stretches (helical) occupy residues 10-30 (FAMKGNVLDMAVGVVIGTAFG) and 76-96 (GNFIQTAVDFLIIAFCIFCVI).

It belongs to the MscL family. Homopentamer.

The protein resides in the cell inner membrane. Channel that opens in response to stretch forces in the membrane lipid bilayer. May participate in the regulation of osmotic pressure changes within the cell. This chain is Large-conductance mechanosensitive channel, found in Campylobacter curvus (strain 525.92).